We begin with the raw amino-acid sequence, 306 residues long: MNEFINFDEISRETWQNLYNTSIAPLTHDELESIRSLNDEISLQDVEDVYLPLIHLLRLYKKNLEDMSYSKGLFLQKIVKTPPLIIGISGSVAVGKSTTARLLQLLLSRAFPKLTVDLVTTDGFLYTTDDLKNMGILDRKGFPESYDMEKLTSFLYHVKNGERFEVPIYSHETYDILPNQSQIIDSPDILIVEGINVLQNPQNQLLYISDFYDFSIYVDADEKLIEKWYLERFDSLLKLAKYDQTNFYHQFTKMPEDKVLNLARETWARVNRVNLREYIEPTRNRAEIILHKAENHHIDKIYLKKF.

90–97 (GSVAVGKS) serves as a coordination point for ATP.

It belongs to the prokaryotic pantothenate kinase family.

The protein resides in the cytoplasm. The enzyme catalyses (R)-pantothenate + ATP = (R)-4'-phosphopantothenate + ADP + H(+). It participates in cofactor biosynthesis; coenzyme A biosynthesis; CoA from (R)-pantothenate: step 1/5. The protein is Pantothenate kinase of Lactococcus lactis subsp. cremoris (strain MG1363).